A 150-amino-acid chain; its full sequence is Dihydroneopterin triphosphate diphosphatase (150 aa).

One can recognise a Nudix hydrolase domain in the interval 5 to 146; it reads VYKRPVSILV…SNRQAIEQFV (142 aa). Substrate contacts are provided by Lys7, Arg29, and Thr40. Residues 41 to 62 carry the Nudix box motif; sequence GSVEEGETAPQAAMREVKEEVT. 2 residues coordinate Mg(2+): Glu56 and Glu60. Residue 81–84 coordinates substrate; that stretch reads FEIF. A Mg(2+)-binding site is contributed by Glu117. Ser135 lines the substrate pocket.

This sequence belongs to the Nudix hydrolase family. Mg(2+) is required as a cofactor.

The catalysed reaction is 7,8-dihydroneopterin 3'-triphosphate + H2O = 7,8-dihydroneopterin 3'-phosphate + diphosphate + H(+). Functionally, catalyzes the hydrolysis of dihydroneopterin triphosphate to dihydroneopterin monophosphate and pyrophosphate. Required for efficient folate biosynthesis. Can also hydrolyze nucleoside triphosphates with a preference for dATP. The sequence is that of Dihydroneopterin triphosphate diphosphatase (nudB) from Escherichia coli O157:H7.